Consider the following 82-residue polypeptide: Neuromacin (82 aa).

A signal peptide spans Met1–Pro23. 4 disulfides stabilise this stretch: Cys25-Cys32, Cys47-Cys51, Cys61-Cys69, and Cys79-Cys81.

This sequence belongs to the macin family.

Its subcellular location is the secreted. This is Neuromacin from Hirudo medicinalis (Medicinal leech).